Consider the following 438-residue polypeptide: Adenosylhomocysteinase (438 aa).

Residues threonine 61, aspartate 137, and glutamate 162 each coordinate substrate. Residue 163 to 165 (TTT) coordinates NAD(+). Substrate-binding residues include lysine 192 and aspartate 196. Residues asparagine 197, 226 to 231 (GYGDVG), glutamate 249, asparagine 284, 305 to 307 (IGH), and asparagine 352 each bind NAD(+).

Belongs to the adenosylhomocysteinase family. NAD(+) is required as a cofactor.

The protein resides in the cytoplasm. The enzyme catalyses S-adenosyl-L-homocysteine + H2O = L-homocysteine + adenosine. The protein operates within amino-acid biosynthesis; L-homocysteine biosynthesis; L-homocysteine from S-adenosyl-L-homocysteine: step 1/1. In terms of biological role, may play a key role in the regulation of the intracellular concentration of adenosylhomocysteine. The protein is Adenosylhomocysteinase of Flavobacterium johnsoniae (strain ATCC 17061 / DSM 2064 / JCM 8514 / BCRC 14874 / CCUG 350202 / NBRC 14942 / NCIMB 11054 / UW101) (Cytophaga johnsonae).